We begin with the raw amino-acid sequence, 126 residues long: MHLSLLKAKIHRATVTHSELNYEGSIAIDGLLLEATGIREFEQVHIWDVTNGARFSTYAIRAEQGSGIISLNGGAARHVQVGDLIIVAAFASMSEDQAKTFKPNLVYVDAHNAISHTNHSIPTQAA.

Residue Ser-25 is the Schiff-base intermediate with substrate; via pyruvic acid of the active site. Ser-25 is subject to Pyruvic acid (Ser). Thr-57 contributes to the substrate binding site. The active-site Proton donor is Tyr-58. 73 to 75 (GGA) is a substrate binding site.

It belongs to the PanD family. Heterooctamer of four alpha and four beta subunits. It depends on pyruvate as a cofactor. Post-translationally, is synthesized initially as an inactive proenzyme, which is activated by self-cleavage at a specific serine bond to produce a beta-subunit with a hydroxyl group at its C-terminus and an alpha-subunit with a pyruvoyl group at its N-terminus.

It is found in the cytoplasm. The catalysed reaction is L-aspartate + H(+) = beta-alanine + CO2. It participates in cofactor biosynthesis; (R)-pantothenate biosynthesis; beta-alanine from L-aspartate: step 1/1. In terms of biological role, catalyzes the pyruvoyl-dependent decarboxylation of aspartate to produce beta-alanine. The polypeptide is Aspartate 1-decarboxylase (Xanthomonas campestris pv. campestris (strain ATCC 33913 / DSM 3586 / NCPPB 528 / LMG 568 / P 25)).